Reading from the N-terminus, the 471-residue chain is Putative multidrug resistance protein MdtD (471 aa).

Topologically, residues 1 to 11 (MTDLPDSTRWQ) are periplasmic. Residues 12–32 (LWIVAFGFFMQSLDTTIVNTA) traverse the membrane as a helical segment. Over 33–48 (LPSMAQSLGESPLHMH) the chain is Cytoplasmic. A helical transmembrane segment spans residues 49–69 (MVIVSYVLTVAVMLPASGWLA). The Periplasmic portion of the chain corresponds to 70–76 (DKVGVRN). A helical membrane pass occupies residues 77 to 97 (IFFTAIVLFTLGSLFCALSGT). Over 98–101 (LNEL) the chain is Cytoplasmic. The helical transmembrane segment at 102 to 124 (LLARALQGVGGAMMVPVGRLTVM) threads the bilayer. The Periplasmic segment spans residues 125 to 137 (KIVPREQYMAAMT). A helical transmembrane segment spans residues 138–158 (FVTLPGQVGPLLGPALGGLLV). Residues 159–164 (EYASWH) lie on the Cytoplasmic side of the membrane. The chain crosses the membrane as a helical span at residues 165–185 (WIFLINIPVGIIGAIATLLLM). Over 186-196 (PNYTMQTRRFD) the chain is Periplasmic. Residues 197–217 (LSGFLLLAVGMAVLTLALDGS) traverse the membrane as a helical segment. Residues 218–224 (KGTGLSP) lie on the Cytoplasmic side of the membrane. Residues 225–245 (LTIAGLVAVGVVALVLYLLHA) traverse the membrane as a helical segment. Residues 246-262 (RNNNRALFSLKLFRTRT) are Periplasmic-facing. A helical transmembrane segment spans residues 263-283 (FSLGLAGSFAGRIGSGMLPFM). Over 284–285 (TP) the chain is Cytoplasmic. A helical transmembrane segment spans residues 286–306 (VFLQIGLGFSPFHAGLMMIPM). Over 307-341 (VLGSMGMKRIVVQVVNRFGYRRVLVATTLGLSLVT) the chain is Periplasmic. The chain crosses the membrane as a helical span at residues 342–362 (LLFMTTALLGWYYVLPFVLFL). The Cytoplasmic segment spans residues 363–395 (QGMVNSTRFSSMNTLTLKDLPDNLASSGNSLLS). The chain crosses the membrane as a helical span at residues 396 to 416 (MIMQLSMSIGVTIAGLLLGLF). At 417-430 (GSQHVSVDSGTTQT) the chain is on the periplasmic side. Residues 431-451 (VFMYTWLSMALIIALPAFIFA) form a helical membrane-spanning segment. The Cytoplasmic segment spans residues 452–471 (RVPNDTHQNVAISRRKRSAQ).

The protein belongs to the major facilitator superfamily. TCR/Tet family.

Its subcellular location is the cell inner membrane. This chain is Putative multidrug resistance protein MdtD, found in Escherichia coli (strain K12 / MC4100 / BW2952).